The sequence spans 348 residues: Calcium-gated potassium channel TvoK (348 aa).

A run of 3 helical transmembrane segments spans residues 19-39 (LTKV…LEFL), 52-72 (YFTA…GDVV), and 80-100 (VVAM…TATI). An RCK N-terminal domain is found at 120–246 (KNHTIICNWN…VSAGATEVLS (127 aa)). One can recognise an RCK C-terminal domain in the interval 266–348 (DFILKSLSET…KKEVEEAIKG (83 aa)).

In terms of assembly, heterooctamer composed of four full-length subunits and four soluble RCK domains.

It is found in the cell membrane. Calcium-gated potassium channel. Can also be activated by Mg(2+), Mn(2+) and Ni(2+). In Thermoplasma volcanium (strain ATCC 51530 / DSM 4299 / JCM 9571 / NBRC 15438 / GSS1), this protein is Calcium-gated potassium channel TvoK.